Consider the following 254-residue polypeptide: Hydroxyethylthiazole kinase (254 aa).

Met40 lines the substrate pocket. Residues Arg116 and Ser162 each contribute to the ATP site. Gly189 is a binding site for substrate.

Belongs to the Thz kinase family. It depends on Mg(2+) as a cofactor.

The enzyme catalyses 5-(2-hydroxyethyl)-4-methylthiazole + ATP = 4-methyl-5-(2-phosphooxyethyl)-thiazole + ADP + H(+). Its pathway is cofactor biosynthesis; thiamine diphosphate biosynthesis; 4-methyl-5-(2-phosphoethyl)-thiazole from 5-(2-hydroxyethyl)-4-methylthiazole: step 1/1. Functionally, catalyzes the phosphorylation of the hydroxyl group of 4-methyl-5-beta-hydroxyethylthiazole (THZ). This chain is Hydroxyethylthiazole kinase, found in Limosilactobacillus fermentum (strain NBRC 3956 / LMG 18251) (Lactobacillus fermentum).